The primary structure comprises 435 residues: 3-phosphoshikimate 1-carboxyvinyltransferase (435 aa).

3-phosphoshikimate contacts are provided by Lys23, Ser24, and Arg28. Lys23 is a binding site for phosphoenolpyruvate. 2 residues coordinate phosphoenolpyruvate: Gly97 and Arg125. 3-phosphoshikimate-binding residues include Ser170, Ser171, Gln172, Ser198, Asp315, Asn338, and Lys342. Gln172 provides a ligand contact to phosphoenolpyruvate. Asp315 acts as the Proton acceptor in catalysis. Arg346, Arg388, and Lys413 together coordinate phosphoenolpyruvate.

Belongs to the EPSP synthase family. In terms of assembly, monomer.

It localises to the cytoplasm. The enzyme catalyses 3-phosphoshikimate + phosphoenolpyruvate = 5-O-(1-carboxyvinyl)-3-phosphoshikimate + phosphate. It functions in the pathway metabolic intermediate biosynthesis; chorismate biosynthesis; chorismate from D-erythrose 4-phosphate and phosphoenolpyruvate: step 6/7. In terms of biological role, catalyzes the transfer of the enolpyruvyl moiety of phosphoenolpyruvate (PEP) to the 5-hydroxyl of shikimate-3-phosphate (S3P) to produce enolpyruvyl shikimate-3-phosphate and inorganic phosphate. The sequence is that of 3-phosphoshikimate 1-carboxyvinyltransferase from Buchnera aphidicola subsp. Cinara cedri (strain Cc).